Here is a 453-residue protein sequence, read N- to C-terminus: Bifunctional protein GlmU (453 aa).

The interval 1–227 (MTQLSVVILA…LMEVEGANNR (227 aa)) is pyrophosphorylase. Residues 9–12 (LAAG), lysine 23, glutamine 74, 79–80 (GT), 101–103 (YGD), glycine 138, glutamate 152, asparagine 167, and asparagine 225 contribute to the UDP-N-acetyl-alpha-D-glucosamine site. Aspartate 103 serves as a coordination point for Mg(2+). Residue asparagine 225 coordinates Mg(2+). A linker region spans residues 228–248 (LQLAALERYYQKIQAEKLLLA). Residues 249 to 453 (GVTIIDPARF…IQGWQRPTKK (205 aa)) form an N-acetyltransferase region. 2 residues coordinate UDP-N-acetyl-alpha-D-glucosamine: arginine 331 and lysine 349. Histidine 361 serves as the catalytic Proton acceptor. Residues tyrosine 364 and asparagine 375 each coordinate UDP-N-acetyl-alpha-D-glucosamine. Acetyl-CoA is bound by residues alanine 378, 384 to 385 (NY), serine 403, alanine 421, and arginine 438.

The protein in the N-terminal section; belongs to the N-acetylglucosamine-1-phosphate uridyltransferase family. It in the C-terminal section; belongs to the transferase hexapeptide repeat family. In terms of assembly, homotrimer. Mg(2+) is required as a cofactor.

Its subcellular location is the cytoplasm. The catalysed reaction is alpha-D-glucosamine 1-phosphate + acetyl-CoA = N-acetyl-alpha-D-glucosamine 1-phosphate + CoA + H(+). The enzyme catalyses N-acetyl-alpha-D-glucosamine 1-phosphate + UTP + H(+) = UDP-N-acetyl-alpha-D-glucosamine + diphosphate. It participates in nucleotide-sugar biosynthesis; UDP-N-acetyl-alpha-D-glucosamine biosynthesis; N-acetyl-alpha-D-glucosamine 1-phosphate from alpha-D-glucosamine 6-phosphate (route II): step 2/2. The protein operates within nucleotide-sugar biosynthesis; UDP-N-acetyl-alpha-D-glucosamine biosynthesis; UDP-N-acetyl-alpha-D-glucosamine from N-acetyl-alpha-D-glucosamine 1-phosphate: step 1/1. Its pathway is bacterial outer membrane biogenesis; LPS lipid A biosynthesis. Its function is as follows. Catalyzes the last two sequential reactions in the de novo biosynthetic pathway for UDP-N-acetylglucosamine (UDP-GlcNAc). The C-terminal domain catalyzes the transfer of acetyl group from acetyl coenzyme A to glucosamine-1-phosphate (GlcN-1-P) to produce N-acetylglucosamine-1-phosphate (GlcNAc-1-P), which is converted into UDP-GlcNAc by the transfer of uridine 5-monophosphate (from uridine 5-triphosphate), a reaction catalyzed by the N-terminal domain. This chain is Bifunctional protein GlmU, found in Glaesserella parasuis serovar 5 (strain SH0165) (Haemophilus parasuis).